The chain runs to 658 residues: Translation factor GUF1, mitochondrial (658 aa).

Residues 1–40 (MRGCLQTVRWLTSAWQRPPSYPPLSRAAPCRFFNVSIPRN) constitute a mitochondrion transit peptide. Positions 60–240 (DRFRNFCIVA…TVVEQIPAPV (181 aa)) constitute a tr-type G domain. Residues 69-76 (AHVDHGKS), 133-137 (DTPGH), and 187-190 (NKVD) each bind GTP.

This sequence belongs to the TRAFAC class translation factor GTPase superfamily. Classic translation factor GTPase family. LepA subfamily.

It localises to the mitochondrion inner membrane. The enzyme catalyses GTP + H2O = GDP + phosphate + H(+). Promotes mitochondrial protein synthesis. May act as a fidelity factor of the translation reaction, by catalyzing a one-codon backward translocation of tRNAs on improperly translocated ribosomes. Binds to mitochondrial ribosomes in a GTP-dependent manner. The protein is Translation factor GUF1, mitochondrial of Paracoccidioides brasiliensis (strain Pb03).